The sequence spans 472 residues: 3-isopropylmalate dehydratase large subunit (472 aa).

The [4Fe-4S] cluster site is built by cysteine 347, cysteine 407, and cysteine 410.

Belongs to the aconitase/IPM isomerase family. LeuC type 1 subfamily. In terms of assembly, heterodimer of LeuC and LeuD. Requires [4Fe-4S] cluster as cofactor.

The catalysed reaction is (2R,3S)-3-isopropylmalate = (2S)-2-isopropylmalate. It functions in the pathway amino-acid biosynthesis; L-leucine biosynthesis; L-leucine from 3-methyl-2-oxobutanoate: step 2/4. Catalyzes the isomerization between 2-isopropylmalate and 3-isopropylmalate, via the formation of 2-isopropylmaleate. This is 3-isopropylmalate dehydratase large subunit from Bacillus licheniformis (strain ATCC 14580 / DSM 13 / JCM 2505 / CCUG 7422 / NBRC 12200 / NCIMB 9375 / NCTC 10341 / NRRL NRS-1264 / Gibson 46).